The primary structure comprises 476 residues: MAARIGSMAGLLCVRWWSSAQLAARGGPLVASQRWAGSSADTVYDVVVSGGGLVGSAMACALGHDIHFHDKKILLLEAGPKKALEKLSETYSNRVSSISPGSTTLLSSFGAWDHICNMRCKAFRRMQVWDSCSEALIMFDRDNLDDMGYIVENDVIMYALTKQLEAVADRVKVLYESKAVGYSWPGAFSMADSSPWVHITLGDGSTLQTKLLIGADGHKSGVRQAAGIQNVSWKYDQSAVVATLHLSEATENNVAWQRFLPSGPIALLPLSDTLSSLVWSTSHEHAAELVSMDEEEFVDAINSAFWSDVHHTDFVDSASAMVRHAVALLKPTKVSARQLPPSIAKVDAKSRALFPLGLGHAAEYVRPRVALIGDAAHRIHPLAGQGVNMGFGDISSLVHHLSTAAFNGKDLGSMSHLTGYETDRQRHNTALLAATDLLKRLYSTSATPLVLLRTWGLQATNAVSPLKEQIMAFASK.

Residues 1-35 (MAARIGSMAGLLCVRWWSSAQLAARGGPLVASQRW) constitute a mitochondrion transit peptide. K219 carries the N6-succinyllysine modification.

The protein belongs to the UbiH/COQ6 family. Component of a multi-subunit COQ enzyme complex, composed of at least COQ3, COQ4, COQ5, COQ6, COQ7 and COQ9. Interacts with COQ8B and COQ7. Requires FAD as cofactor. As to expression, expressed in the kidney, in podocytes.

The protein resides in the mitochondrion inner membrane. Its subcellular location is the golgi apparatus. It is found in the cell projection. The catalysed reaction is 4-hydroxy-3-(all-trans-decaprenyl)benzoate + 2 reduced [2Fe-2S]-[ferredoxin] + O2 + 2 H(+) = 3,4-dihydroxy-5-(all-trans-decaprenyl)benzoate + 2 oxidized [2Fe-2S]-[ferredoxin] + H2O. It catalyses the reaction 2-methoxy-6-(all-trans-decaprenyl)phenol + 2 reduced [2Fe-2S]-[ferredoxin] + O2 + 2 H(+) = 2-methoxy-6-(all-trans-decaprenyl)benzene-1,4-diol + 2 oxidized [2Fe-2S]-[ferredoxin] + H2O. Its pathway is cofactor biosynthesis; ubiquinone biosynthesis. Its function is as follows. FAD-dependent monooxygenase required for two non-consecutive steps during ubiquinone biosynthesis. Required for the C5-ring hydroxylation during ubiquinone biosynthesis by catalyzing the hydroxylation of 4-hydroxy-3-(all-trans-decaprenyl)benzoic acid to 3,4-dihydroxy-5-(all-trans-decaprenyl)benzoic acid. Also acts downstream of COQ4, for the C1-hydroxylation during ubiquinone biosynthesis by catalyzing the hydroxylation of 2-methoxy-6-(all-trans-decaprenyl)phenol to 2-methoxy-6-(all-trans-decaprenyl)benzene-1,4-diol. The electrons required for the hydroxylation reaction are funneled indirectly to COQ6 from NADPH via a ferredoxin/ferredoxin reductase system composed of FDX2 and FDXR. In Mus musculus (Mouse), this protein is Ubiquinone biosynthesis monooxygenase COQ6, mitochondrial.